Here is a 429-residue protein sequence, read N- to C-terminus: Adenylosuccinate synthetase (429 aa).

GTP is bound by residues 12–18 (GDEGKGK) and 40–42 (GHT). Catalysis depends on Asp-13, which acts as the Proton acceptor. Positions 13 and 40 each coordinate Mg(2+). Residues 13–16 (DEGK), 38–41 (NAGH), Thr-129, Arg-143, Gln-223, Thr-238, and Arg-302 each bind IMP. Residue His-41 is the Proton donor of the active site. 298 to 304 (VVTGRKR) lines the substrate pocket. GTP-binding positions include Arg-304, 330 to 332 (KLD), and 412 to 414 (STS).

Belongs to the adenylosuccinate synthetase family. In terms of assembly, homodimer. Mg(2+) serves as cofactor.

The protein resides in the cytoplasm. The catalysed reaction is IMP + L-aspartate + GTP = N(6)-(1,2-dicarboxyethyl)-AMP + GDP + phosphate + 2 H(+). Its pathway is purine metabolism; AMP biosynthesis via de novo pathway; AMP from IMP: step 1/2. Plays an important role in the de novo pathway of purine nucleotide biosynthesis. Catalyzes the first committed step in the biosynthesis of AMP from IMP. The chain is Adenylosuccinate synthetase from Brucella abortus (strain 2308).